Reading from the N-terminus, the 89-residue chain is Probable oxaloacetate decarboxylase gamma chain (89 aa).

Residues 13–33 traverse the membrane as a helical segment; sequence LMLSGMGFVITFLLILIWAIT.

The protein belongs to the OadG family. In terms of assembly, heterotrimer of an alpha, a beta and a gamma subunit. It depends on Na(+) as a cofactor.

It is found in the cell membrane. It carries out the reaction oxaloacetate + 2 Na(+)(in) + H(+) = pyruvate + 2 Na(+)(out) + CO2. Catalyzes the decarboxylation of oxaloacetate coupled to Na(+) translocation. In Actinobacillus succinogenes (strain ATCC 55618 / DSM 22257 / CCUG 43843 / 130Z), this protein is Probable oxaloacetate decarboxylase gamma chain.